Consider the following 554-residue polypeptide: Urocanate hydratase (554 aa).

NAD(+) contacts are provided by residues 52–53 (GG), Q130, 176–178 (GMG), E196, R201, 242–243 (NA), 263–267 (QTSAH), 273–274 (YL), and Y322. C410 is a catalytic residue. G492 contributes to the NAD(+) binding site.

This sequence belongs to the urocanase family. Requires NAD(+) as cofactor.

It is found in the cytoplasm. It carries out the reaction 4-imidazolone-5-propanoate = trans-urocanate + H2O. The protein operates within amino-acid degradation; L-histidine degradation into L-glutamate; N-formimidoyl-L-glutamate from L-histidine: step 2/3. Its function is as follows. Catalyzes the conversion of urocanate to 4-imidazolone-5-propionate. The chain is Urocanate hydratase from Shewanella halifaxensis (strain HAW-EB4).